The following is a 1480-amino-acid chain: Cystic fibrosis transmembrane conductance regulator (1480 aa).

At 1 to 77 (MQRSPLEKAS…KLINALRRCF (77 aa)) the chain is on the cytoplasmic side. Residues 78 to 98 (FWRFMFYGIFLYLGEVTKAVQ) form a helical membrane-spanning segment. In terms of domain architecture, ABC transmembrane type-1 1 spans 81–365 (FMFYGIFLYL…WAVQTWYDSL (285 aa)). At 99-122 (PLLLGRIIASYDPDNKEERSIAIY) the chain is on the extracellular side. The helical transmembrane segment at 123 to 146 (LGIGLCLLFIVRTLLLHPAIFGLH) threads the bilayer. Residues 147–195 (HIGMQMRIAMFSLIYKKTLKLSSRVLDKISIGQLVSLLSNNLNKFDEGL) lie on the Cytoplasmic side of the membrane. A helical membrane pass occupies residues 196-216 (ALAHFVWIAPLQVALLMGLIW). At 217–222 (ELLQAS) the chain is on the extracellular side. A helical membrane pass occupies residues 223–243 (AFCGLGFLIVLALFQAGLGRM). The Cytoplasmic segment spans residues 244–298 (MMKYRDQRAGKISERLVITSEMIENIQSVKAYCWEEAMEKMIENLRQTELKLTRK). A helical transmembrane segment spans residues 299-319 (AAYVRYFNSSAFFFSGFFVVF). Residues 320-339 (LSVLPYALIKGIVLRKIFTT) are Extracellular-facing. The chain crosses the membrane as a helical span at residues 340–358 (ISFCIVLRMAVTRQFPWAV). Topologically, residues 359–858 (QTWYDSLGAI…YLRYITVHKS (500 aa)) are cytoplasmic. Residues Trp401, Ser434, 458-465 (GSTGAGKT), and Gln493 contribute to the ATP site. The ABC transporter 1 domain maps to 423-646 (NGDDSLFFSN…RPDFSSKLMG (224 aa)). Residue Cys524 is the site of S-palmitoyl cysteine attachment. Residues Ser549 and Ser660 each carry the phosphoserine modification. Positions 654 to 831 (SAERRNSILT…EEINEEDLKE (178 aa)) are disordered R region. Position 670 is a phosphoserine; by PKA (Ser670). Ser686 is modified (phosphoserine). Lys688 is covalently cross-linked (Glycyl lysine isopeptide (Lys-Gly) (interchain with G-Cter in ubiquitin)). 2 positions are modified to phosphoserine: Ser700 and Ser712. Thr717 is subject to Phosphothreonine. Residues Ser737, Ser753, Ser768, Ser790, Ser795, and Ser813 each carry the phosphoserine modification. Residues 859–879 (LIFVLIWCLVIFLAEVAASLV) traverse the membrane as a helical segment. Positions 859 to 1155 (LIFVLIWCLV…AVNSSIDVDS (297 aa)) constitute an ABC transmembrane type-1 2 domain. Topologically, residues 880-918 (VLWLLGNTPLQDKGNSTHSRNNSYAVIITSTSSYYVFYI) are extracellular. Asn894 and Asn900 each carry an N-linked (GlcNAc...) asparagine glycan. The chain crosses the membrane as a discontinuously helical span at residues 919 to 939 (YVGVADTLLAMGFFRGLPLVH). Residues 940–990 (TLITVSKILHHKMLHSVLQAPMSTLNTLKAGGILNRFSKDIAILDDLLPLT) are Cytoplasmic-facing. Residues 991–1011 (IFDFIQLLLIVIGAIAVVAVL) traverse the membrane as a helical segment. Topologically, residues 1012–1013 (QP) are extracellular. A helical membrane pass occupies residues 1014–1034 (YIFVATVPVIVAFIMLRAYFL). Residues 1035-1095 (QTSQQLKQLE…TANWFLYLST (61 aa)) are Cytoplasmic-facing. Residues 1096 to 1116 (LRWFQMRIEMIFVMFFIAVTF) traverse the membrane as a helical segment. The Extracellular segment spans residues 1117–1130 (ISILTTGEGEGRIG). The chain crosses the membrane as a helical span at residues 1131 to 1151 (IILTLAMNIMSTLQWAVNSSI). Residues 1152–1480 (DVDSLMRSVS…TEEEVQDTRL (329 aa)) are Cytoplasmic-facing. An ABC transporter 2 domain is found at 1210 to 1443 (MTVKDLSAKY…RSLFRQAISP (234 aa)). Residues Tyr1219 and 1244–1251 (GRTGSGKS) each bind ATP. Residues 1386–1480 (RTLKQAFADC…TEEEVQDTRL (95 aa)) form an interaction with GORASP2 region. Cys1395 carries S-palmitoyl cysteine lipidation. Ser1444 and Ser1456 each carry phosphoserine. Positions 1451 to 1480 (PHRNSSKGKSQPQIAALKEETEEEVQDTRL) are disordered. The segment covering 1470–1480 (ETEEEVQDTRL) has biased composition (acidic residues). Positions 1478-1480 (TRL) match the PDZ-binding motif.

This sequence belongs to the ABC transporter superfamily. ABCC family. CFTR transporter (TC 3.A.1.202) subfamily. In terms of assembly, monomer; does not require oligomerization for channel activity. May form oligomers in the membrane. Interacts with SLC26A3, SLC26A6 and NHERF1. Interacts with SHANK2. Interacts with MYO6. Interacts (via C-terminus) with GOPC (via PDZ domain); this promotes CFTR internalization and thereby decreases channel activity. Interacts with SLC4A7 through NHERF1. Found in a complex with MYO5B and RAB11A. Interacts with ANO1. Interacts with SLC26A8. Interacts with AHCYL1; the interaction increases CFTR activity. Interacts with CSE1L. The core-glycosylated form interacts with GORASP2 (via PDZ GRASP-type 1 domain) in respone to ER stress. Interacts with MARCHF2; the interaction leads to CFTR ubiqtuitination and degradation. Interacts with ADGRG2. N-glycosylated. In terms of processing, phosphorylated; cAMP treatment promotes phosphorylation and activates the channel. Dephosphorylation decreases the ATPase activity (in vitro). Phosphorylation at PKA sites activates the channel. Phosphorylation at PKC sites enhances the response to phosphorylation by PKA. Phosphorylated by AMPK; this inhibits channel activity. Post-translationally, ubiquitinated, leading to its degradation in the lysosome. Deubiquitination by USP10 in early endosomes enhances its endocytic recycling to the cell membrane. Ubiquitinated by RNF185 during ER stress. Ubiquitinated by MARCHF2.

The protein resides in the apical cell membrane. The protein localises to the early endosome membrane. Its subcellular location is the cell membrane. It is found in the recycling endosome membrane. It localises to the endoplasmic reticulum membrane. The protein resides in the nucleus. The enzyme catalyses ATP + H2O + closed Cl(-) channel = ADP + phosphate + open Cl(-) channel.. It carries out the reaction chloride(in) = chloride(out). The catalysed reaction is hydrogencarbonate(in) = hydrogencarbonate(out). It catalyses the reaction ATP + H2O = ADP + phosphate + H(+). Its function is as follows. Epithelial ion channel that plays an important role in the regulation of epithelial ion and water transport and fluid homeostasis. Mediates the transport of chloride ions across the cell membrane. Possesses an intrinsic ATPase activity and utilizes ATP to gate its channel; the passive flow of anions through the channel is gated by cycles of ATP binding and hydrolysis by the ATP-binding domains. The ion channel is also permeable to HCO(3)(-); selectivity depends on the extracellular chloride concentration. Exerts its function also by modulating the activity of other ion channels and transporters. Contributes to the regulation of the pH and the ion content of the epithelial fluid layer. Modulates the activity of the epithelial sodium channel (ENaC) complex, in part by regulating the cell surface expression of the ENaC complex. May regulate bicarbonate secretion and salvage in epithelial cells by regulating the transporter SLC4A7. Can inhibit the chloride channel activity of ANO1. Plays a role in the chloride and bicarbonate homeostasis during sperm epididymal maturation and capacitation. The sequence is that of Cystic fibrosis transmembrane conductance regulator from Nomascus leucogenys (Northern white-cheeked gibbon).